The primary structure comprises 342 residues: Dihydroorotate dehydrogenase (quinone) (342 aa).

FMN contacts are provided by residues 65–69 (AGLDK) and threonine 89. Residue lysine 69 participates in substrate binding. 114–118 (NRMGF) lines the substrate pocket. Residues asparagine 142 and asparagine 175 each coordinate FMN. Asparagine 175 contributes to the substrate binding site. Serine 178 functions as the Nucleophile in the catalytic mechanism. Asparagine 180 contributes to the substrate binding site. FMN contacts are provided by lysine 220 and threonine 248. 249–250 (NT) contributes to the substrate binding site. FMN contacts are provided by residues glycine 271, glycine 300, and 321–322 (YT).

Belongs to the dihydroorotate dehydrogenase family. Type 2 subfamily. Monomer. It depends on FMN as a cofactor.

The protein resides in the cell membrane. The catalysed reaction is (S)-dihydroorotate + a quinone = orotate + a quinol. It participates in pyrimidine metabolism; UMP biosynthesis via de novo pathway; orotate from (S)-dihydroorotate (quinone route): step 1/1. In terms of biological role, catalyzes the conversion of dihydroorotate to orotate with quinone as electron acceptor. The chain is Dihydroorotate dehydrogenase (quinone) from Burkholderia pseudomallei (strain K96243).